The primary structure comprises 663 residues: Leishmanolysin-like peptidase (663 aa).

A Zn(2+)-binding site is contributed by His246. Glu247 is an active-site residue. 2 residues coordinate Zn(2+): His250 and His353.

It belongs to the peptidase M8 family. Zn(2+) is required as a cofactor.

The protein localises to the cytoplasm. Functionally, metalloprotease. This is Leishmanolysin-like peptidase from Caenorhabditis briggsae.